The chain runs to 220 residues: Deoxyribose-phosphate aldolase (220 aa).

Asp-89 functions as the Proton donor/acceptor in the catalytic mechanism. Lys-151 (schiff-base intermediate with acetaldehyde) is an active-site residue. The active-site Proton donor/acceptor is Lys-180.

The protein belongs to the DeoC/FbaB aldolase family. DeoC type 1 subfamily. As to quaternary structure, homotetramer, in solution and in the crystal structure.

The protein localises to the cytoplasm. It carries out the reaction 2-deoxy-D-ribose 5-phosphate = D-glyceraldehyde 3-phosphate + acetaldehyde. It participates in carbohydrate degradation; 2-deoxy-D-ribose 1-phosphate degradation; D-glyceraldehyde 3-phosphate and acetaldehyde from 2-deoxy-alpha-D-ribose 1-phosphate: step 2/2. In terms of biological role, catalyzes a reversible aldol reaction between acetaldehyde and D-glyceraldehyde 3-phosphate to generate 2-deoxy-D-ribose 5-phosphate. The polypeptide is Deoxyribose-phosphate aldolase (Thermus thermophilus (strain ATCC 27634 / DSM 579 / HB8)).